The primary structure comprises 211 residues: Protein-L-isoaspartate O-methyltransferase (211 aa).

Ser62 is a catalytic residue.

The protein belongs to the methyltransferase superfamily. L-isoaspartyl/D-aspartyl protein methyltransferase family.

It localises to the cytoplasm. The enzyme catalyses [protein]-L-isoaspartate + S-adenosyl-L-methionine = [protein]-L-isoaspartate alpha-methyl ester + S-adenosyl-L-homocysteine. Its function is as follows. Catalyzes the methyl esterification of L-isoaspartyl residues in peptides and proteins that result from spontaneous decomposition of normal L-aspartyl and L-asparaginyl residues. It plays a role in the repair and/or degradation of damaged proteins. This Shewanella woodyi (strain ATCC 51908 / MS32) protein is Protein-L-isoaspartate O-methyltransferase.